The following is a 460-amino-acid chain: Glycine--tRNA ligase (460 aa).

Positions 99 and 162 each coordinate substrate. Residues 194–196, 204–209, 281–282, and 325–328 contribute to the ATP site; these read RNE, FRTREF, EL, and GVGR. 209–213 serves as a coordination point for substrate; it reads FEQME. 321–325 is a binding site for substrate; sequence EPAAG.

It belongs to the class-II aminoacyl-tRNA synthetase family. As to quaternary structure, homodimer.

It is found in the cytoplasm. The enzyme catalyses tRNA(Gly) + glycine + ATP = glycyl-tRNA(Gly) + AMP + diphosphate. Functionally, catalyzes the attachment of glycine to tRNA(Gly). This is Glycine--tRNA ligase from Streptomyces coelicolor (strain ATCC BAA-471 / A3(2) / M145).